The primary structure comprises 142 residues: MKTFVAKPETVKRDWYVVDAEGKTLGRLASEIASRLRGKHKAEYTPHVDTGDYIIVINAEKVAVTGNKAKNKVYYRHSEFPGGLKSITFEKLIDRKPEMALELAVKGMLPRGPLGRAMYRKLKVYAGAEHNHVAQQPQVLDI.

The protein belongs to the universal ribosomal protein uL13 family. Part of the 50S ribosomal subunit.

Functionally, this protein is one of the early assembly proteins of the 50S ribosomal subunit, although it is not seen to bind rRNA by itself. It is important during the early stages of 50S assembly. This Vibrio campbellii (strain ATCC BAA-1116) protein is Large ribosomal subunit protein uL13.